Consider the following 1896-residue polypeptide: von Willebrand factor A domain-containing protein 8 (1896 aa).

The transit peptide at Met-1–Arg-18 directs the protein to the mitochondrion. Gly-439 to Ser-446 is an ATP binding site. Positions Gly-1536–Thr-1564 are disordered. The 183-residue stretch at Arg-1705–Ile-1887 folds into the VWFA domain.

In terms of assembly, monomer.

It is found in the mitochondrion. Functionally, exhibits ATPase activity in vitro. The sequence is that of von Willebrand factor A domain-containing protein 8 (vwa8) from Danio rerio (Zebrafish).